A 57-amino-acid chain; its full sequence is MARYRRTRTRSRSRRRRRSRRRRSSRRRRYGRSRRSYRSVGRRRRRYGRRRRRRRRY.

Positions 1-57 (MARYRRTRTRSRSRRRRRSRRRRSSRRRRYGRSRRSYRSVGRRRRRYGRRRRRRRRY) are disordered. Residue threonine 9 is modified to Phosphothreonine.

This sequence belongs to the protamine P1 family. As to expression, testis.

It localises to the nucleus. The protein resides in the chromosome. In terms of biological role, protamines substitute for histones in the chromatin of sperm during the haploid phase of spermatogenesis. They compact sperm DNA into a highly condensed, stable and inactive complex. The protein is Sperm histone of Coturnix japonica (Japanese quail).